We begin with the raw amino-acid sequence, 96 residues long: Nucleoid-associated protein CCA_00330 (96 aa).

The protein belongs to the YbaB/EbfC family. Homodimer.

It localises to the cytoplasm. The protein resides in the nucleoid. In terms of biological role, binds to DNA and alters its conformation. May be involved in regulation of gene expression, nucleoid organization and DNA protection. The protein is Nucleoid-associated protein CCA_00330 of Chlamydia caviae (strain ATCC VR-813 / DSM 19441 / 03DC25 / GPIC) (Chlamydophila caviae).